Reading from the N-terminus, the 464-residue chain is uncharacterized protein (464 aa).

Disordered regions lie at residues 290–374 and 445–464; these read YRKQ…ERPK and ETDD…PLEE. Positions 293 to 302 are enriched in low complexity; the sequence is QQQWQQQQQQ. The segment covering 303 to 318 has biased composition (basic residues); it reads RKVKTPIKKQEAKKKA. Positions 352–367 are enriched in polar residues; that stretch reads DMKQQQQMEKGTTSKQ. Positions 445–454 are enriched in acidic residues; that stretch reads ETDDEDEENQ.

This is an uncharacterized protein from Macaca fascicularis (Crab-eating macaque).